The sequence spans 74 residues: Tetrahydromethanopterin S-methyltransferase subunit G (74 aa).

Residues 47-67 traverse the membrane as a helical segment; it reads VGIAYGLAIGFIFVYVLGTVL.

Belongs to the MtrG family. The complex is composed of 8 subunits; MtrA, MtrB, MtrC, MtrD, MtrE, MtrF, MtrG and MtrH.

Its subcellular location is the cell membrane. The catalysed reaction is 5-methyl-5,6,7,8-tetrahydromethanopterin + coenzyme M + 2 Na(+)(in) = 5,6,7,8-tetrahydromethanopterin + methyl-coenzyme M + 2 Na(+)(out). Its pathway is one-carbon metabolism; methanogenesis from CO(2); methyl-coenzyme M from 5,10-methylene-5,6,7,8-tetrahydromethanopterin: step 2/2. In terms of biological role, part of a complex that catalyzes the formation of methyl-coenzyme M and tetrahydromethanopterin from coenzyme M and methyl-tetrahydromethanopterin. This is an energy-conserving, sodium-ion translocating step. The sequence is that of Tetrahydromethanopterin S-methyltransferase subunit G from Methanococcus maripaludis (strain DSM 14266 / JCM 13030 / NBRC 101832 / S2 / LL).